A 485-amino-acid chain; its full sequence is NADH-quinone oxidoreductase subunit N (485 aa).

Helical transmembrane passes span 8-28 (LIAL…MLSI), 35-55 (FLNA…LWFV), 71-91 (GFAM…CTFA), 105-125 (FYLL…ANHL), 127-147 (SLFL…GYAF), 159-179 (YTIL…LVYA), 203-223 (LLAG…LVPF), 235-255 (PAPV…GVVM), 271-291 (VVLA…ALSQ), 297-317 (LLGY…IALQ), 326-346 (VGVY…VVSL), 373-393 (AAVM…LGFI), 408-430 (WWLV…RVAV), and 455-475 (IVVL…QPLI).

The protein belongs to the complex I subunit 2 family. In terms of assembly, NDH-1 is composed of 13 different subunits. Subunits NuoA, H, J, K, L, M, N constitute the membrane sector of the complex.

It is found in the cell inner membrane. It catalyses the reaction a quinone + NADH + 5 H(+)(in) = a quinol + NAD(+) + 4 H(+)(out). In terms of biological role, NDH-1 shuttles electrons from NADH, via FMN and iron-sulfur (Fe-S) centers, to quinones in the respiratory chain. The immediate electron acceptor for the enzyme in this species is believed to be ubiquinone. Couples the redox reaction to proton translocation (for every two electrons transferred, four hydrogen ions are translocated across the cytoplasmic membrane), and thus conserves the redox energy in a proton gradient. In Escherichia coli O139:H28 (strain E24377A / ETEC), this protein is NADH-quinone oxidoreductase subunit N.